Consider the following 71-residue polypeptide: MKFLNILTLAFITGMASAAAVPGGTTTNDAASTLDNLNNKRSVCGQLCFNNKDCGGPCPKCNTKEGVCVKK.

The first 18 residues, Met1–Ala18, serve as a signal peptide directing secretion. Intrachain disulfides connect Cys44–Cys58, Cys48–Cys61, and Cys54–Cys68.

Belongs to the UPF0499 family.

It localises to the secreted. The chain is UPF0499 protein ACLA_083080 from Aspergillus clavatus (strain ATCC 1007 / CBS 513.65 / DSM 816 / NCTC 3887 / NRRL 1 / QM 1276 / 107).